A 433-amino-acid polypeptide reads, in one-letter code: Pseudopaline synthase (433 aa).

Residues 7–27 form a helical membrane-spanning segment; that stretch reads SLGNVLLVGLGAVAIQVALDL. NAD(+)-binding positions include 16 to 19, 39 to 40, and Thr154; these read LGAV and NH. The active-site Proton donor/acceptor is His219. Glu364 contributes to the NAD(+) binding site.

The protein belongs to the staphylopine dehydrogenase family. In terms of assembly, homodimer. Interacts with CntL.

The protein localises to the cell membrane. The catalysed reaction is pseudopaline + NAD(+) + H2O = (2S)-2-amino-4-{[(1S)-1-carboxy-2-(1H-imidazol-4-yl)ethyl]amino}butanoate + 2-oxoglutarate + NADH + H(+). Catalyzes the NADH-dependent reductive condensation of alpha-ketoglutarate to the intermediate formed by the adjacently encoded enzyme CntL, namely (2S)-2-amino-4-{[(1S)-1-carboxy-2-(1H-imidazol-4-yl)ethyl]amino}butanoate, leading to the production of pseudopaline. This is the last step in the biosynthesis of the metallophore pseudopaline, which is involved in the acquisition of nickel and zinc, and thus enables bacterial growth inside the host, where metal access is limited. Therefore, this enzyme probably contributes to Pseudomonas virulence. Can use neither pyruvate nor NADPH in place of alpha-ketoglutarate and NADH, respectively. The protein is Pseudopaline synthase of Pseudomonas aeruginosa (strain UCBPP-PA14).